We begin with the raw amino-acid sequence, 410 residues long: Phosphoserine phosphatase (410 aa).

The region spanning Leu13–Asp91 is the ACT domain. Asp187 functions as the Nucleophile in the catalytic mechanism. 2 residues coordinate Mg(2+): Asp187 and Asp189. The active-site Proton donor is the Asp189. Residues Glu196, Arg232, Ser275–Gly276, and Lys320 contribute to the substrate site. Mg(2+) is bound at residue Asp343. Position 346 (Asn346) interacts with substrate.

Belongs to the HAD-like hydrolase superfamily. SerB family. Mg(2+) is required as a cofactor.

It catalyses the reaction O-phospho-L-serine + H2O = L-serine + phosphate. The catalysed reaction is O-phospho-D-serine + H2O = D-serine + phosphate. The protein operates within amino-acid biosynthesis; L-serine biosynthesis; L-serine from 3-phospho-D-glycerate: step 3/3. Its function is as follows. Catalyzes the dephosphorylation of phosphoserine (P-Ser) in vitro. Also catalyzes the dephosphorylation of phosphothreonine (P-Thr) in vitro. This chain is Phosphoserine phosphatase, found in Streptomyces coelicolor (strain ATCC BAA-471 / A3(2) / M145).